Here is a 163-residue protein sequence, read N- to C-terminus: Phosphopantetheine adenylyltransferase (163 aa).

Ser-10 contributes to the substrate binding site. ATP contacts are provided by residues 10 to 11 and His-18; that span reads SF. 3 residues coordinate substrate: Lys-42, Leu-74, and Arg-88. ATP is bound by residues 89–91, Glu-99, and 124–130; these read GLR and YSFLSSS.

The protein belongs to the bacterial CoaD family. Homohexamer. Requires Mg(2+) as cofactor.

The protein localises to the cytoplasm. The catalysed reaction is (R)-4'-phosphopantetheine + ATP + H(+) = 3'-dephospho-CoA + diphosphate. It participates in cofactor biosynthesis; coenzyme A biosynthesis; CoA from (R)-pantothenate: step 4/5. Functionally, reversibly transfers an adenylyl group from ATP to 4'-phosphopantetheine, yielding dephospho-CoA (dPCoA) and pyrophosphate. This is Phosphopantetheine adenylyltransferase from Bacillus mycoides (strain KBAB4) (Bacillus weihenstephanensis).